The sequence spans 260 residues: Ribosomal RNA small subunit methyltransferase J (260 aa).

Residues R108–D109, E124–R125, and D178 each bind S-adenosyl-L-methionine.

It belongs to the methyltransferase superfamily. RsmJ family.

The protein resides in the cytoplasm. It catalyses the reaction guanosine(1516) in 16S rRNA + S-adenosyl-L-methionine = N(2)-methylguanosine(1516) in 16S rRNA + S-adenosyl-L-homocysteine + H(+). Its function is as follows. Specifically methylates the guanosine in position 1516 of 16S rRNA. The protein is Ribosomal RNA small subunit methyltransferase J of Ectopseudomonas mendocina (strain ymp) (Pseudomonas mendocina).